The sequence spans 150 residues: Urease accessory protein UreE (150 aa).

This sequence belongs to the UreE family.

The protein localises to the cytoplasm. Functionally, involved in urease metallocenter assembly. Binds nickel. Probably functions as a nickel donor during metallocenter assembly. The chain is Urease accessory protein UreE from Staphylococcus aureus (strain MRSA252).